We begin with the raw amino-acid sequence, 271 residues long: Ribose-phosphate pyrophosphokinase 2 (271 aa).

ATP is bound by residues 34 to 36 (DGE) and 82 to 83 (RQ). Mg(2+)-binding residues include His-115 and Asp-150. The active site involves Lys-173. Residues Arg-175, Asp-199, and 203–207 (STGGT) contribute to the D-ribose 5-phosphate site.

It belongs to the ribose-phosphate pyrophosphokinase family. Class III (archaeal) subfamily. Mg(2+) is required as a cofactor.

Its subcellular location is the cytoplasm. It catalyses the reaction D-ribose 5-phosphate + ATP = 5-phospho-alpha-D-ribose 1-diphosphate + AMP + H(+). Its pathway is metabolic intermediate biosynthesis; 5-phospho-alpha-D-ribose 1-diphosphate biosynthesis; 5-phospho-alpha-D-ribose 1-diphosphate from D-ribose 5-phosphate (route I): step 1/1. Involved in the biosynthesis of the central metabolite phospho-alpha-D-ribosyl-1-pyrophosphate (PRPP) via the transfer of pyrophosphoryl group from ATP to 1-hydroxyl of ribose-5-phosphate (Rib-5-P). The chain is Ribose-phosphate pyrophosphokinase 2 from Archaeoglobus fulgidus (strain ATCC 49558 / DSM 4304 / JCM 9628 / NBRC 100126 / VC-16).